The sequence spans 290 residues: uncharacterized protein (290 aa).

Residues 30-274 (PTILLLHGFP…YDTGHFALET (245 aa)) form the AB hydrolase-1 domain. The active site involves His-269.

It belongs to the DmpD/TodF/XylF esterase family.

This is an uncharacterized protein from Saccharomyces cerevisiae (strain ATCC 204508 / S288c) (Baker's yeast).